Here is a 91-residue protein sequence, read N- to C-terminus: DNA-binding protein HU (91 aa).

This sequence belongs to the bacterial histone-like protein family.

Its function is as follows. Histone-like DNA-binding protein which is capable of wrapping DNA to stabilize it, and thus to prevent its denaturation under extreme environmental conditions. Also seems to act as a fortuitous virulence factor in delayed sequelae by binding to heparan sulfate-proteoglycans in the extracellular matrix of target organs and acting as a nidus for in situ immune complex formation. This chain is DNA-binding protein HU (hup), found in Streptococcus mutans serotype c (strain ATCC 700610 / UA159).